A 393-amino-acid chain; its full sequence is MDALLVVNAGSSSLKFQVFGIVGMDLTRQIRGKVDGIGTRPRLQATAADGTQLIDQTYDAKAVRDLPAAITEARRWLLTLEGFELQAVGHRVVHGGPDYTRPVLIDATVLDHLAGYQDLAPLHQPNNLAPIRLAMEINPDVPQVACFDTAFHRGHAKHTDCYALPRSFYDEGVRRYGFHGLSYEYIAERLREVASRAAKGRVVVAHLGSGASMCGLRDGRSIESTMLHRPSTGCRWDTPGQLDPGVVLYLILQKGMKAQAVSDLLYHDAGLKGLSGLSNDMRDLLASDDPHAALSVAHFVYRCVLNGGMLAAALGGIDAFVFTAGVGENSPPIRARIVEGLAWLGAELDPAANEAGAALISTATSRVAVHVLPTDEELMIARHTLALISAPNA.

Position 8 (Asn8) interacts with Mg(2+). Lys15 contributes to the ATP binding site. Arg91 is a substrate binding site. Catalysis depends on Asp148, which acts as the Proton donor/acceptor. ATP is bound by residues 206-210, 280-282, and 325-329; these read HLGSG, DMR, and GVGEN. A Mg(2+)-binding site is contributed by Glu376.

The protein belongs to the acetokinase family. As to quaternary structure, homodimer. Mg(2+) is required as a cofactor. It depends on Mn(2+) as a cofactor.

It is found in the cytoplasm. It catalyses the reaction acetate + ATP = acetyl phosphate + ADP. It participates in metabolic intermediate biosynthesis; acetyl-CoA biosynthesis; acetyl-CoA from acetate: step 1/2. In terms of biological role, catalyzes the formation of acetyl phosphate from acetate and ATP. Can also catalyze the reverse reaction. The polypeptide is Acetate kinase (Rhizobium meliloti (Ensifer meliloti)).